The primary structure comprises 171 residues: Lipoprotein signal peptidase (171 aa).

Transmembrane regions (helical) follow at residues 15–35 (WLWLALLVFIADITIKLIVMD), 47–67 (VLPFFNLLYVHNYGAAFSFLS), 72–92 (WQRWLFTGIAFVVTGMLAYWM), and 107–127 (ALIIGGAVGNVFDRIVHGFVV). Catalysis depends on residues Asp-128 and Asp-146. The helical transmembrane segment at 141-161 (AFNLADSTICIGAAMIILDGF) threads the bilayer.

Belongs to the peptidase A8 family.

It is found in the cell inner membrane. The enzyme catalyses Release of signal peptides from bacterial membrane prolipoproteins. Hydrolyzes -Xaa-Yaa-Zaa-|-(S,diacylglyceryl)Cys-, in which Xaa is hydrophobic (preferably Leu), and Yaa (Ala or Ser) and Zaa (Gly or Ala) have small, neutral side chains.. It participates in protein modification; lipoprotein biosynthesis (signal peptide cleavage). Its function is as follows. This protein specifically catalyzes the removal of signal peptides from prolipoproteins. The chain is Lipoprotein signal peptidase from Vibrio cholerae serotype O1 (strain ATCC 39315 / El Tor Inaba N16961).